Here is a 343-residue protein sequence, read N- to C-terminus: GTPase Obg (343 aa).

Positions 1–159 constitute an Obg domain; sequence MKFLDEAKVY…HWLWLRLKLI (159 aa). The 168-residue stretch at 160–327 folds into the OBG-type G domain; that stretch reads ADAGLVGLPN…ALRALLAAMD (168 aa). GTP contacts are provided by residues 166-173, 191-195, 212-215, 279-282, and 308-310; these read GLPNAGKS, FTTLH, DIPG, SKAD, and SAA. Residues Ser173 and Thr193 each coordinate Mg(2+).

It belongs to the TRAFAC class OBG-HflX-like GTPase superfamily. OBG GTPase family. In terms of assembly, monomer. Mg(2+) is required as a cofactor.

It is found in the cytoplasm. In terms of biological role, an essential GTPase which binds GTP, GDP and possibly (p)ppGpp with moderate affinity, with high nucleotide exchange rates and a fairly low GTP hydrolysis rate. Plays a role in control of the cell cycle, stress response, ribosome biogenesis and in those bacteria that undergo differentiation, in morphogenesis control. In Methylobacterium sp. (strain 4-46), this protein is GTPase Obg.